The primary structure comprises 2351 residues: Coagulation factor VIII (2351 aa).

Residues 1 to 19 (MQIELSTCFFLCLLRFCFS) form the signal peptide. 2 consecutive Plastocyanin-like domains span residues 20–198 (ATRR…LLVC) and 206–348 (EKTQ…VDSC). The region spanning 20-348 (ATRRYYLGAV…MEAYVKVDSC (329 aa)) is the F5/8 type A 1 domain. N-linked (GlcNAc...) asparagine glycosylation is present at asparagine 60. A disulfide bridge links cysteine 172 with cysteine 198. N-linked (GlcNAc...) asparagine glycosylation is present at asparagine 258. Cysteine 267 and cysteine 348 form a disulfide bridge. Position 365 is a sulfotyrosine (tyrosine 365). Plastocyanin-like domains are found at residues 399–573 (KTWV…LLIC) and 583–730 (NQIM…VSSC). One can recognise an F5/8 type A 2 domain in the interval 399-730 (KTWVHYIAAE…MTALLKVSSC (332 aa)). A disulfide bridge links cysteine 547 with cysteine 573. A glycan (N-linked (GlcNAc...) asparagine) is linked at asparagine 601. Residues cysteine 649 and cysteine 730 are joined by a disulfide bond. Sulfotyrosine occurs at positions 737, 738, and 742. A b region spans residues 760–1667 (SFSQNSRHPS…NPPVLKRHQR (908 aa)). N-linked (GlcNAc...) asparagine glycosylation is found at asparagine 776, asparagine 803, asparagine 847, and asparagine 919. Disordered regions lie at residues 906-928 (STIP…PPSM) and 941-961 (FGKK…SEEN). N-linked (GlcNAc...) asparagine glycosylation is found at asparagine 962, asparagine 982, asparagine 1020, asparagine 1024, asparagine 1074, asparagine 1085, asparagine 1204, asparagine 1274, asparagine 1278, asparagine 1301, asparagine 1319, asparagine 1431, and asparagine 1461. A sulfotyrosine mark is found at tyrosine 1683 and tyrosine 1699. 2 consecutive Plastocyanin-like domains span residues 1713–1877 (KTRH…LLVC) and 1887–2040 (GRQV…SNKC). One can recognise an F5/8 type A 3 domain in the interval 1713 to 2040 (KTRHYFIAAV…TLFLVYSNKC (328 aa)). An N-linked (GlcNAc...) asparagine glycan is attached at asparagine 1829. Cystine bridges form between cysteine 1851-cysteine 1877, cysteine 1918-cysteine 1922, cysteine 2040-cysteine 2188, and cysteine 2193-cysteine 2345. F5/8 type C domains lie at 2040–2188 (CQTP…LMGC) and 2193–2345 (CSMP…VLGC). Asparagine 2137 carries an N-linked (GlcNAc...) asparagine glycan.

It belongs to the multicopper oxidase family. In terms of assembly, interacts with VWF/vWF. vWF binding is essential for the stabilization of F8 in circulation. Sulfation on Tyr-1699 is essential for binding vWF. Post-translationally, proteolytically cleaved by cathepsin CTSG to produce a partially activated form.

Its subcellular location is the secreted. The protein resides in the extracellular space. Its function is as follows. Factor VIII, along with calcium and phospholipid, acts as a cofactor for F9/factor IXa when it converts F10/factor X to the activated form, factor Xa. This chain is Coagulation factor VIII (F8), found in Homo sapiens (Human).